The primary structure comprises 395 residues: Transcription termination/antitermination protein NusA (395 aa).

The region spanning Asn137 to Ser201 is the S1 motif domain. 2 KH domains span residues Ser243–Leu291 and Lys331–Glu378.

It belongs to the NusA family. Monomer. Binds directly to the core enzyme of the DNA-dependent RNA polymerase and to nascent RNA.

Its subcellular location is the cytoplasm. Its function is as follows. Participates in both transcription termination and antitermination. The polypeptide is Transcription termination/antitermination protein NusA (Helicobacter pylori (strain ATCC 700392 / 26695) (Campylobacter pylori)).